Consider the following 261-residue polypeptide: tRNA(His) guanylyltransferase (261 aa).

Positions 29, 30, and 76 each coordinate Mg(2+). GTP contacts are provided by residues 29-34 (DGKGFH) and 75-76 (SD).

It belongs to the tRNA(His) guanylyltransferase family. Mg(2+) serves as cofactor.

It carries out the reaction a 5'-end ribonucleotide-tRNA(His) + GTP + ATP + H2O = a 5'-end phospho-guanosine-ribonucleotide-tRNA(His) + AMP + 2 diphosphate + H(+). In terms of biological role, adds a GMP to the 5'-end of tRNA(His) after transcription and RNase P cleavage. This Schizosaccharomyces pombe (strain 972 / ATCC 24843) (Fission yeast) protein is tRNA(His) guanylyltransferase (thg1).